The primary structure comprises 489 residues: Argininosuccinate lyase (489 aa).

Positions 1–20 (MSEPSAAVGQRPGGESAPAH) are disordered.

The protein belongs to the lyase 1 family. Argininosuccinate lyase subfamily.

It is found in the cytoplasm. It catalyses the reaction 2-(N(omega)-L-arginino)succinate = fumarate + L-arginine. It participates in amino-acid biosynthesis; L-arginine biosynthesis; L-arginine from L-ornithine and carbamoyl phosphate: step 3/3. This is Argininosuccinate lyase from Acidothermus cellulolyticus (strain ATCC 43068 / DSM 8971 / 11B).